The chain runs to 194 residues: Imidazoleglycerol-phosphate dehydratase (194 aa).

Belongs to the imidazoleglycerol-phosphate dehydratase family.

The protein resides in the cytoplasm. The catalysed reaction is D-erythro-1-(imidazol-4-yl)glycerol 3-phosphate = 3-(imidazol-4-yl)-2-oxopropyl phosphate + H2O. Its pathway is amino-acid biosynthesis; L-histidine biosynthesis; L-histidine from 5-phospho-alpha-D-ribose 1-diphosphate: step 6/9. The protein is Imidazoleglycerol-phosphate dehydratase of Bacillus pumilus (strain SAFR-032).